The primary structure comprises 301 residues: Acetylglutamate kinase (301 aa).

Substrate-binding positions include 68–69 (GG), Arg90, and Asn195.

This sequence belongs to the acetylglutamate kinase family. ArgB subfamily.

The protein localises to the cytoplasm. The catalysed reaction is N-acetyl-L-glutamate + ATP = N-acetyl-L-glutamyl 5-phosphate + ADP. It functions in the pathway amino-acid biosynthesis; L-arginine biosynthesis; N(2)-acetyl-L-ornithine from L-glutamate: step 2/4. In terms of biological role, catalyzes the ATP-dependent phosphorylation of N-acetyl-L-glutamate. In Pseudomonas fluorescens (strain Pf0-1), this protein is Acetylglutamate kinase.